The following is a 460-amino-acid chain: DNA repair protein RadA (460 aa).

The segment at 11–28 (CNECGADYPRWQGQCSAC) adopts a C4-type zinc-finger fold. 102–109 (GNPGAGKS) serves as a coordination point for ATP. A RadA KNRFG motif motif is present at residues 258–262 (KNRFG). A lon-protease-like region spans residues 357–460 (DVFVNVVGGV…SDALSVFDDL (104 aa)).

Belongs to the RecA family. RadA subfamily.

Functionally, DNA-dependent ATPase involved in processing of recombination intermediates, plays a role in repairing DNA breaks. Stimulates the branch migration of RecA-mediated strand transfer reactions, allowing the 3' invading strand to extend heteroduplex DNA faster. Binds ssDNA in the presence of ADP but not other nucleotides, has ATPase activity that is stimulated by ssDNA and various branched DNA structures, but inhibited by SSB. Does not have RecA's homology-searching function. Genetic experiments involving combination of radA mutations with mutations in recA, recB, recG, recJ, recQ, ruvA and ruvC show it plays a role in recombination and recombinational repair, probably involving stabilizing or processing branched DNA or blocked replication forks. Is genetically synergistic to RecG and RuvABC. May be involved in recovery of genetic rearrangements during replication fork breakdown. In combination with RadD is important in recovery from double-strand DNA breaks (DSB). This is DNA repair protein RadA from Escherichia coli (strain K12).